Here is a 207-residue protein sequence, read N- to C-terminus: MYVMTQSGWLELICGCMFSGKSEELIRRVRRAQFAKQEVKVFKPTIDNRYSEDAVVSHNGNSVIAIPVATPAEMFRYISAATDVVAIDEIQFFSDDIIDVVQTLADCGYRVIAAGLDQDFRGEPFGPVPALMAIAESVTKLQAVCTVCGSPASRTQRLINGAPASYDDPVILVGASEAYEPRCRHHHEVPGKPKKRYNHPLAGHTGE.

ATP contacts are provided by residues 15–22 (GCMFSGKS) and 88–91 (DEIQ). Residue Glu89 is the Proton acceptor of the active site. Zn(2+) contacts are provided by Cys145, Cys148, Cys183, and His186. Over residues 184–198 (RHHHEVPGKPKKRYN) the composition is skewed to basic residues. A disordered region spans residues 184–207 (RHHHEVPGKPKKRYNHPLAGHTGE).

This sequence belongs to the thymidine kinase family. Homotetramer.

Its subcellular location is the cytoplasm. The enzyme catalyses thymidine + ATP = dTMP + ADP + H(+). This is Thymidine kinase from Geobacillus kaustophilus (strain HTA426).